A 275-amino-acid polypeptide reads, in one-letter code: uncharacterized protein (275 aa).

The protein belongs to the MtfA family.

This is an uncharacterized protein from Synechocystis sp. (strain ATCC 27184 / PCC 6803 / Kazusa).